We begin with the raw amino-acid sequence, 261 residues long: TM2 domain-containing protein 3 (261 aa).

Residues 1 to 44 form the signal peptide; the sequence is MEAAAEPLRSVRHLSRVLLFLSQCYILSGDGSLNLEHSQPLAQA. The Extracellular portion of the chain corresponds to 45–193; the sequence is IKDPGPTRTF…RTFPKLLYCN (149 aa). N-linked (GlcNAc...) asparagine glycans are attached at residues Asn101, Asn136, Asn154, Asn171, Asn183, and Asn193. A helical membrane pass occupies residues 194–214; sequence WTGGYKWSTALALSITLGGFG. Residues 197 to 244 enclose the TM2 domain; that stretch reads GYKWSTALALSITLGGFGADRFYLGQWREGLGKLFSFGGLGIWTLIDV. Residues 215 to 229 lie on the Cytoplasmic side of the membrane; sequence ADRFYLGQWREGLGK. Residues 230 to 250 form a helical membrane-spanning segment; the sequence is LFSFGGLGIWTLIDVLLIGVG. The Extracellular portion of the chain corresponds to 251–261; it reads YVGPADGSLYI.

Belongs to the TM2 family.

It localises to the membrane. The sequence is that of TM2 domain-containing protein 3 (Tm2d3) from Mus musculus (Mouse).